A 325-amino-acid polypeptide reads, in one-letter code: Inner membrane protein YrbG (325 aa).

Residues 1–5 (MLLAT) lie on the Periplasmic side of the membrane. Residues 6 to 26 (ALLIVGLLLVVYSADRLVFAA) form a helical membrane-spanning segment. Topologically, residues 27-37 (SILCRTFGIPP) are cytoplasmic. The chain crosses the membrane as a helical span at residues 38–58 (LIIGMTVVSIGTSLPEVIVSL). Over 59–67 (AASLHEQRD) the chain is Periplasmic. The chain crosses the membrane as a helical span at residues 68-88 (LAVGTALGSNIINILLILGLA). At 89–104 (ALVRPFTVHSDVLRRE) the chain is on the cytoplasmic side. The chain crosses the membrane as a helical span at residues 105-125 (LPLMLLVSVVAGSVLYDGQLS). Position 126 (Arg-126) is a topological domain, periplasmic. The helical transmembrane segment at 127 to 147 (SDGIFLLFLAVLWLLFIVKLA) threads the bilayer. Topologically, residues 148 to 169 (RQAERQGTDSLTREQLAELPRD) are cytoplasmic. A helical membrane pass occupies residues 170–190 (GGLPVAFLWLGIALIIMPVAT). The Periplasmic portion of the chain corresponds to 191–198 (RMVVDNAT). The helical transmembrane segment at 199-219 (VLANYFAISELTMGLTAIAIG) threads the bilayer. Over 220-243 (TSLPELATAIAGVRKGENDIAVGN) the chain is Cytoplasmic. Residues 244-264 (IIGANIFNIVIVLGLPALITP) form a helical membrane-spanning segment. At 265 to 269 (GEIDP) the chain is on the periplasmic side. Residues 270–290 (LAYSRDYSVMLLVSIIFALLC) form a helical membrane-spanning segment. Topologically, residues 291-302 (WRRSPQPGRGVG) are cytoplasmic. A helical membrane pass occupies residues 303-323 (VLLTGGFIVWLAMLYWLSPIL). Topologically, residues 324–325 (VE) are periplasmic.

It belongs to the Ca(2+):cation antiporter (CaCA) (TC 2.A.19) family.

Its subcellular location is the cell inner membrane. This Escherichia coli (strain K12) protein is Inner membrane protein YrbG (yrbG).